Here is a 254-residue protein sequence, read N- to C-terminus: Pyrroloquinoline-quinone synthase (254 aa).

Belongs to the PqqC family.

The enzyme catalyses 6-(2-amino-2-carboxyethyl)-7,8-dioxo-1,2,3,4,7,8-hexahydroquinoline-2,4-dicarboxylate + 3 O2 = pyrroloquinoline quinone + 2 H2O2 + 2 H2O + H(+). It participates in cofactor biosynthesis; pyrroloquinoline quinone biosynthesis. Its function is as follows. Ring cyclization and eight-electron oxidation of 3a-(2-amino-2-carboxyethyl)-4,5-dioxo-4,5,6,7,8,9-hexahydroquinoline-7,9-dicarboxylic-acid to PQQ. The protein is Pyrroloquinoline-quinone synthase of Rhodopseudomonas palustris (strain ATCC BAA-98 / CGA009).